We begin with the raw amino-acid sequence, 460 residues long: 3'3'-cGAMP-specific phosphodiesterase 3 (460 aa).

The 162-residue stretch at 28-189 (PPEHCIRCCW…IPLFSRIALL (162 aa)) folds into the HD domain. Residues 260–455 (DDAYLECIVT…LPDEYTQLPH (196 aa)) enclose the HD-GYP domain. 2 residues coordinate a divalent metal cation: histidine 317 and aspartate 318. Lysine 321 acts as the Proton donor in catalysis. A divalent metal cation is bound by residues histidine 346, histidine 370, histidine 371, and aspartate 399.

Monomer. The cofactor is Mn(2+).

The catalysed reaction is 3',3'-cGAMP + H2O = 5'-pApG-3' + H(+). In terms of biological role, phosphodiesterase (PDE) that catalyzes the hydrolysis of 3'3'-cyclic GMP-AMP (3'3'-cGAMP), leading to linear 5'-pApG. Counteracts the function of the 3'3'-cGAMP synthase DncV, and is involved in the modulation of intracellular 3'3'-cGAMP levels. Enhances bacterial chemotaxis and inhibits intestinal colonization in vivo. Thus exerts a crucial role in regulating bacterial infectivity through catalyzing 3'3'-cGAMP degradation. Is specific for 3'3'-cGAMP since it cannot degrade other cGAMP linkage isomers (3'2'-, 2'3'-, and 2'2'-cGAMPs); is also able to hydrolyze c-di-GMP but not c-di-AMP. This Vibrio cholerae serotype O1 (strain ATCC 39315 / El Tor Inaba N16961) protein is 3'3'-cGAMP-specific phosphodiesterase 3.